We begin with the raw amino-acid sequence, 367 residues long: Forkhead box protein I2-B (367 aa).

Residues 31–40 are compositionally biased toward low complexity; sequence QQQNQQLPQR. The disordered stretch occupies residues 31–51; it reads QQQNQQLPQRPAAPPAPGYGL. The segment at residues 124-218 is a DNA-binding region (fork-head); the sequence is RPPYSYSSLI…DNGNFRRKRK (95 aa). Positions 224–254 are disordered; sequence VGAGFDEESNEDKKPLALKSLGPDSPGGASV.

Its subcellular location is the nucleus. Possible transcriptional activator. The protein is Forkhead box protein I2-B (foxi2-b) of Xenopus laevis (African clawed frog).